A 460-amino-acid chain; its full sequence is Lysosomal proton-coupled steroid conjugate and bile acid symporter SLC46A3 (460 aa).

Positions 1 to 25 (MKISFIEPAILLNAFAMTLTIPLTA) are cleaved as a signal peptide. Topologically, residues 26 to 73 (QYVYRRIWEETGNYTFASNSNGSECDQNKSSSIFAFREEVQKKASLFN) are extracellular. Asn38, Asn46, and Asn53 each carry an N-linked (GlcNAc...) asparagine glycan. A helical transmembrane segment spans residues 74-94 (LQVEMSALIPGLVSTFMLLAS). At 95–111 (SDNHGRKLPMVLSSLGS) the chain is on the cytoplasmic side. A helical membrane pass occupies residues 112–132 (LGTNTWLCMMSYFDLPLQLLI). Topologically, residues 133–135 (AST) are extracellular. A helical transmembrane segment spans residues 136–156 (FIGALFGNYTTFWGACFAYIV). At 157 to 170 (DQQKEYKHRIIRIA) the chain is on the cytoplasmic side. The helical transmembrane segment at 171-191 (ILDFMLGVVTGLTGLSSGYFI) threads the bilayer. The Extracellular portion of the chain corresponds to 192–195 (RELG). A helical transmembrane segment spans residues 196–216 (FVWSYFITAMVLIVNLAYILF). Residues 217–257 (FLNDPIKESSSQIVTMSCIESLKDLFYRTYMLFKNGSSKRQ) are Cytoplasmic-facing. Residues 258–278 (ALLCLLIFTLVIYFFVIIGIS) form a helical membrane-spanning segment. Topologically, residues 279 to 301 (PIFTLYELGPPLCWNEVYIGYGS) are extracellular. Residues 302–322 (ALGSVSFLSSFLGIWLFSYCL) traverse the membrane as a helical segment. The Cytoplasmic segment spans residues 323-324 (KD). The helical transmembrane segment at 325-345 (IHIAYIGIFTTMVGMTLAAFT) threads the bilayer. The Extracellular portion of the chain corresponds to 346–347 (RT). The helical transmembrane segment at 348 to 368 (TLMMFLVRIPFIFTIMPLSVL) threads the bilayer. Over 369–381 (RSMLSKVVHSTEQ) the chain is Cytoplasmic. Residues 382–402 (GALFACIAFLETLAGVTSTSA) traverse the membrane as a helical segment. At 403 to 410 (YSGIYSAT) the chain is on the extracellular side. The chain crosses the membrane as a helical span at residues 411 to 431 (VAWYPGFIFLLSAGLLVLPAI). Topologically, residues 432–460 (SLCCVKSIGWEEGSYTLLVHEEPSEHTSD) are cytoplasmic. Positions 446–449 (YTLL) match the Tyrosine-based lysosomal-sorting motif motif.

The protein belongs to the major facilitator superfamily. SLC46A family. In terms of tissue distribution, expressed in liver, kidney, small intestine and colon.

It localises to the lysosome membrane. The catalysed reaction is estrone 3-sulfate(out) + n H(+)(out) = estrone 3-sulfate(in) + n H(+)(in). It carries out the reaction 25-hydroxyvitamin D3 sulfate(out) + n H(+)(out) = 25-hydroxyvitamin D3 sulfate(in) + n H(+)(in). It catalyses the reaction cholate(out) + n H(+)(out) = cholate(in) + n H(+)(in). The enzyme catalyses glycocholate(out) + n H(+)(out) = glycocholate(in) + n H(+)(in). The catalysed reaction is taurocholate(out) + n H(+)(out) = taurocholate(in) + n H(+)(in). It carries out the reaction dehydroepiandrosterone 3-sulfate(out) + n H(+)(out) = dehydroepiandrosterone 3-sulfate(in) + n H(+)(in). It catalyses the reaction N-acetyl-D-muramoyl-L-alanyl-D-isoglutamine(out) + n H(+)(out) = N-acetyl-D-muramoyl-L-alanyl-D-isoglutamine(in) + n H(+)(in). The enzyme catalyses 2',3'-cGAMP(out) + n H(+)(out) = 2',3'-cGAMP(in) + n H(+)(in). Its function is as follows. Lysosomal proton-coupled steroid conjugate and bile acid transporter. Preferentially recognizes lipophilic steroid conjugates or bile acis as endogenous substrates and seems to mediate escape from lysosomes to the cytoplasm. Modulates hepatic cytosolic copper homeostasis, maybe acting as a lysosomal copper transporter and sequestering copper ions in the lysosome. Delivers pathogen-associated molecular patterns to cytosolic pattern recognition receptors as part of the innate immune response to microbes. Selectively transports bacterial muramyl dipeptide (MDP) into the cytosol for recognition by NOD2, triggering inflammatory responses. Likely acts as a redundant importer of cyclic GMP-AMP dinucleotides (cGAMPs) in monocyte and macrophage cell lineages. The transport mechanism, its electrogenicity and stoichiometry remain to be elucidated. This is Lysosomal proton-coupled steroid conjugate and bile acid symporter SLC46A3 (Slc46a3) from Mus musculus (Mouse).